A 988-amino-acid polypeptide reads, in one-letter code: Transcriptional regulator of yeast form adherence 5 (988 aa).

2 consecutive C2H2-type zinc fingers follow at residues 7-29 (YICAFCARAFTRSEHKQRHERSH) and 35-59 (FHCLHCTSSFVRRDLLQRHCRTVHH). Residues 59 to 83 (HTNLNPSTLPSNKSLKNPTTNPLDL) show a composition bias toward polar residues. Disordered stretches follow at residues 59–129 (HTNL…SSVG) and 174–229 (SMES…SNNN). A compositionally biased stretch (low complexity) spans 84–106 (SNNEGTTTTTKTGNRKNNSNKNG). Composition is skewed to polar residues over residues 113 to 129 (TNPNPAVSNDDNRSSVG) and 174 to 208 (SMESDQHSLTTFDSPTSSLGVSMTPSGSTNSEIVL).

Its subcellular location is the nucleus. Its function is as follows. Transcription factor required for yeast cell adherence to silicone substrate. In Candida albicans (strain SC5314 / ATCC MYA-2876) (Yeast), this protein is Transcriptional regulator of yeast form adherence 5 (TRY5).